A 292-amino-acid chain; its full sequence is Seed lectin (292 aa).

A signal peptide spans 1-37 (MATSNSRPHLLQTHKPFSVVLAISITFFLLLLNKVNS). Asn-82 and Asn-154 each carry an N-linked (GlcNAc...) asparagine glycan. Positions 163 and 165 each coordinate Mn(2+). Ca(2+) contacts are provided by Asp-165, His-167, Asn-169, and Asp-172. 2 residues coordinate Mn(2+): Asp-172 and His-177. Asn-186 carries N-linked (GlcNAc...) asparagine glycosylation.

It belongs to the leguminous lectin family.

Functionally, mannose/glucose-specific lectin. This Styphnolobium japonicum (Japanese pagoda tree) protein is Seed lectin.